The sequence spans 545 residues: CTP synthase (545 aa).

The tract at residues 1-266 (MKTKFIFITG…DQKIAIMLKL (266 aa)) is amidoligase domain. Position 14 (Ser-14) interacts with CTP. UTP is bound at residue Ser-14. Residues 15-20 (SLGKGL) and Asp-72 each bind ATP. Positions 72 and 140 each coordinate Mg(2+). Residues 147 to 149 (DIE), 187 to 192 (KTKPTQ), and Lys-223 each bind CTP. UTP-binding positions include 187–192 (KTKPTQ) and Lys-223. Residues 291 to 545 (TIGIVGKYVD…IKASCENKNK (255 aa)) form the Glutamine amidotransferase type-1 domain. Gly-353 contacts L-glutamine. Cys-380 acts as the Nucleophile; for glutamine hydrolysis in catalysis. L-glutamine is bound by residues 381-384 (LGMQ), Glu-404, and Arg-472. Residues His-518 and Glu-520 contribute to the active site.

This sequence belongs to the CTP synthase family. Homotetramer.

The catalysed reaction is UTP + L-glutamine + ATP + H2O = CTP + L-glutamate + ADP + phosphate + 2 H(+). The enzyme catalyses L-glutamine + H2O = L-glutamate + NH4(+). It carries out the reaction UTP + NH4(+) + ATP = CTP + ADP + phosphate + 2 H(+). It functions in the pathway pyrimidine metabolism; CTP biosynthesis via de novo pathway; CTP from UDP: step 2/2. Allosterically activated by GTP, when glutamine is the substrate; GTP has no effect on the reaction when ammonia is the substrate. The allosteric effector GTP functions by stabilizing the protein conformation that binds the tetrahedral intermediate(s) formed during glutamine hydrolysis. Inhibited by the product CTP, via allosteric rather than competitive inhibition. Functionally, catalyzes the ATP-dependent amination of UTP to CTP with either L-glutamine or ammonia as the source of nitrogen. Regulates intracellular CTP levels through interactions with the four ribonucleotide triphosphates. The polypeptide is CTP synthase (Maridesulfovibrio salexigens (strain ATCC 14822 / DSM 2638 / NCIMB 8403 / VKM B-1763) (Desulfovibrio salexigens)).